A 597-amino-acid polypeptide reads, in one-letter code: Elongation factor 4 (597 aa).

Positions 2–184 constitute a tr-type G domain; sequence KNIRNFSIIA…EIVAKIPAPT (183 aa). GTP is bound by residues 14–19 and 131–134; these read DHGKST and NKID.

Belongs to the TRAFAC class translation factor GTPase superfamily. Classic translation factor GTPase family. LepA subfamily.

Its subcellular location is the cell inner membrane. It catalyses the reaction GTP + H2O = GDP + phosphate + H(+). Functionally, required for accurate and efficient protein synthesis under certain stress conditions. May act as a fidelity factor of the translation reaction, by catalyzing a one-codon backward translocation of tRNAs on improperly translocated ribosomes. Back-translocation proceeds from a post-translocation (POST) complex to a pre-translocation (PRE) complex, thus giving elongation factor G a second chance to translocate the tRNAs correctly. Binds to ribosomes in a GTP-dependent manner. The sequence is that of Elongation factor 4 from Neisseria meningitidis serogroup C (strain 053442).